The primary structure comprises 766 residues: 5-methyltetrahydropteroyltriglutamate--homocysteine methyltransferase (766 aa).

5-methyltetrahydropteroyltri-L-glutamate-binding positions include 16 to 19 (RELK) and lysine 119. L-homocysteine is bound by residues 440-442 (IGS) and glutamate 493. Residues 440-442 (IGS) and glutamate 493 contribute to the L-methionine site. 5-methyltetrahydropteroyltri-L-glutamate is bound by residues 524 to 525 (RC) and tryptophan 570. Aspartate 608 contributes to the L-homocysteine binding site. L-methionine is bound at residue aspartate 608. Glutamate 614 serves as a coordination point for 5-methyltetrahydropteroyltri-L-glutamate. Positions 650, 652, and 674 each coordinate Zn(2+). Histidine 703 acts as the Proton donor in catalysis. Cysteine 735 lines the Zn(2+) pocket.

Belongs to the vitamin-B12 independent methionine synthase family. Zn(2+) serves as cofactor.

The enzyme catalyses 5-methyltetrahydropteroyltri-L-glutamate + L-homocysteine = tetrahydropteroyltri-L-glutamate + L-methionine. The protein operates within amino-acid biosynthesis; L-methionine biosynthesis via de novo pathway; L-methionine from L-homocysteine (MetE route): step 1/1. Its function is as follows. Catalyzes the transfer of a methyl group from 5-methyltetrahydrofolate to homocysteine resulting in methionine formation. This is 5-methyltetrahydropteroyltriglutamate--homocysteine methyltransferase from Pseudomonas aeruginosa (strain ATCC 15692 / DSM 22644 / CIP 104116 / JCM 14847 / LMG 12228 / 1C / PRS 101 / PAO1).